A 331-amino-acid polypeptide reads, in one-letter code: N-acetyl-alpha-D-glucosaminyl-diphospho-ditrans,octacis-undecaprenol 4-epimerase (331 aa).

Residues 13–14 (FV), 34–39 (QQSHFY), 47–48 (DV), Ser-109, Tyr-132, and Lys-136 contribute to the NAD(+) site. Positions 109 and 132 each coordinate substrate. The Proton acceptor role is filled by Tyr-132. Substrate-binding positions include 183–184 (GK) and 199–201 (YVG).

The protein belongs to the NAD(P)-dependent epimerase/dehydratase family. NAD(+) serves as cofactor.

It localises to the cell membrane. The enzyme catalyses N-acetyl-alpha-D-glucosaminyl-di-trans,octa-cis-undecaprenyl diphosphate = N-acetyl-alpha-D-galactosaminyl-di-trans,octa-cis-undecaprenyl diphosphate. The protein operates within bacterial outer membrane biogenesis; LPS O-antigen biosynthesis. Functionally, involved in biosynthesis of the repeating tetrasaccharide unit of the O-antigen. Catalyzes the reversible epimerization of the hydroxyl group at position C4 of undecaprenyl pyrophosphate-N-acetylglucosamine (UndPP-GlcNAc) to yield undecaprenyl pyrophosphate-N-acetylgalactosamine (UndPP-GalNAc). The sequence is that of N-acetyl-alpha-D-glucosaminyl-diphospho-ditrans,octacis-undecaprenol 4-epimerase from Escherichia coli O157:H7.